Consider the following 217-residue polypeptide: 3,4-dihydroxy-2-butanone 4-phosphate synthase (217 aa).

D-ribulose 5-phosphate is bound by residues 37–38 (RE), D42, 150–154 (RGGHT), and E174. Residue E38 coordinates Mg(2+). H153 contributes to the Mg(2+) binding site.

The protein belongs to the DHBP synthase family. In terms of assembly, homodimer. It depends on Mg(2+) as a cofactor. Mn(2+) serves as cofactor.

The enzyme catalyses D-ribulose 5-phosphate = (2S)-2-hydroxy-3-oxobutyl phosphate + formate + H(+). The protein operates within cofactor biosynthesis; riboflavin biosynthesis; 2-hydroxy-3-oxobutyl phosphate from D-ribulose 5-phosphate: step 1/1. Catalyzes the conversion of D-ribulose 5-phosphate to formate and 3,4-dihydroxy-2-butanone 4-phosphate. The sequence is that of 3,4-dihydroxy-2-butanone 4-phosphate synthase from Sodalis glossinidius (strain morsitans).